The following is a 307-amino-acid chain: Probable RuBisCO transcriptional regulator (307 aa).

In terms of domain architecture, HTH lysR-type spans 5–62; sequence FTLQQLRIFKAIASEKSFTQAAEILFVSQPSLSKQIKTLENRLGILLLNRTGNKILLT. The segment at residues 22 to 41 is a DNA-binding region (H-T-H motif); sequence FTQAAEILFVSQPSLSKQIK.

The protein belongs to the LysR transcriptional regulatory family.

The protein localises to the plastid. The protein resides in the chloroplast. Trans-acting transcriptional regulator of RuBisCO genes (rbcL and rbcS) expression. This Thalassiosira pseudonana (Marine diatom) protein is Probable RuBisCO transcriptional regulator (rbcR-A).